Consider the following 419-residue polypeptide: Alpha-galactosidase A (419 aa).

The signal sequence occupies residues 1 to 31 (MKLLSRDTRLVCELALCPLALVFWSILGVRA). Intrachain disulfides connect C52–C94 and C56–C63. N-linked (GlcNAc...) asparagine glycosylation occurs at N139. Cysteines 142 and 172 form a disulfide. The active-site Nucleophile is the D170. Y186 carries the post-translational modification Phosphotyrosine. N-linked (GlcNAc...) asparagine glycosylation occurs at N192. Residues C202 and C223 are joined by a disulfide bond. Substrate is bound at residue 203–207 (EWPLY). The N-linked (GlcNAc...) asparagine glycan is linked to N215. Catalysis depends on D231, which acts as the Proton donor. A disulfide bridge connects residues C378 and C382.

Belongs to the glycosyl hydrolase 27 family. As to quaternary structure, homodimer.

The protein resides in the lysosome. The enzyme catalyses Hydrolysis of terminal, non-reducing alpha-D-galactose residues in alpha-D-galactosides, including galactose oligosaccharides, galactomannans and galactolipids.. It catalyses the reaction a globoside Gb3Cer (d18:1(4E)) + H2O = a beta-D-Gal-(1-&gt;4)-beta-D-Glc-(1&lt;-&gt;1)-Cer(d18:1(4E)) + D-galactose. The catalysed reaction is a globoside Gb3Cer + H2O = a beta-D-galactosyl-(1-&gt;4)-beta-D-glucosyl-(1&lt;-&gt;1)-ceramide + D-galactose. Galactosylgalactosylglucosylceramidase activity is stimulated by saposin B and ammonium chloride. In terms of biological role, catalyzes the hydrolysis of glycosphingolipids and participates in their degradation in the lysosome. The protein is Alpha-galactosidase A of Mus musculus (Mouse).